The following is a 598-amino-acid chain: Probable ATP-dependent RNA helicase DDX52 (598 aa).

N6-acetyllysine is present on Lys15. At Ser39 the chain carries Phosphoserine. The Q motif motif lies at Gln166 to Met194. One can recognise a Helicase ATP-binding domain in the interval Ile197–Val375. Ala210 to Thr217 is a binding site for ATP. The short motif at Asp319–Asp322 is the DEAD box element. Residues Thr386–Gln547 form the Helicase C-terminal domain.

This sequence belongs to the DEAD box helicase family. DDX52/ROK1 subfamily.

The protein resides in the nucleus. Its subcellular location is the nucleolus. The enzyme catalyses ATP + H2O = ADP + phosphate + H(+). Its function is as follows. Required for efficient ribosome biogenesis. May control cell cycle progression by regulating translation of mRNAs that contain a terminal oligo pyrimidine (TOP) motif in their 5' UTRs, such as GTPBP4. This is Probable ATP-dependent RNA helicase DDX52 (Ddx52) from Mus musculus (Mouse).